We begin with the raw amino-acid sequence, 370 residues long: Spermidine/putrescine import ATP-binding protein PotA 1 (370 aa).

The 239-residue stretch at 12 to 250 folds into the ABC transporter domain; it reads VSIRAVRKVY…PGNRFVADFI (239 aa). An ATP-binding site is contributed by 48 to 55; that stretch reads GPSGCGKT.

It belongs to the ABC transporter superfamily. Spermidine/putrescine importer (TC 3.A.1.11.1) family. As to quaternary structure, the complex is composed of two ATP-binding proteins (PotA), two transmembrane proteins (PotB and PotC) and a solute-binding protein (PotD).

It localises to the cell inner membrane. The catalysed reaction is ATP + H2O + polyamine-[polyamine-binding protein]Side 1 = ADP + phosphate + polyamineSide 2 + [polyamine-binding protein]Side 1.. In terms of biological role, part of the ABC transporter complex PotABCD involved in spermidine/putrescine import. Responsible for energy coupling to the transport system. This Pseudomonas aeruginosa (strain ATCC 15692 / DSM 22644 / CIP 104116 / JCM 14847 / LMG 12228 / 1C / PRS 101 / PAO1) protein is Spermidine/putrescine import ATP-binding protein PotA 1.